The following is a 343-amino-acid chain: Protein RecA (343 aa).

68–75 (GPESSGKT) is a binding site for ATP.

Belongs to the RecA family.

The protein resides in the cytoplasm. In terms of biological role, can catalyze the hydrolysis of ATP in the presence of single-stranded DNA, the ATP-dependent uptake of single-stranded DNA by duplex DNA, and the ATP-dependent hybridization of homologous single-stranded DNAs. It interacts with LexA causing its activation and leading to its autocatalytic cleavage. The sequence is that of Protein RecA from Syntrophobacter fumaroxidans (strain DSM 10017 / MPOB).